The chain runs to 360 residues: NADH-quinone oxidoreductase subunit H (360 aa).

A run of 8 helical transmembrane segments spans residues G20–M40, G95–I115, L130–A150, F176–A196, G206–I226, I261–F281, I297–I317, and I336–W356.

It belongs to the complex I subunit 1 family. In terms of assembly, NDH-1 is composed of 14 different subunits. Subunits NuoA, H, J, K, L, M, N constitute the membrane sector of the complex.

It is found in the cell inner membrane. It catalyses the reaction a quinone + NADH + 5 H(+)(in) = a quinol + NAD(+) + 4 H(+)(out). Its function is as follows. NDH-1 shuttles electrons from NADH, via FMN and iron-sulfur (Fe-S) centers, to quinones in the respiratory chain. The immediate electron acceptor for the enzyme in this species is believed to be ubiquinone. Couples the redox reaction to proton translocation (for every two electrons transferred, four hydrogen ions are translocated across the cytoplasmic membrane), and thus conserves the redox energy in a proton gradient. This subunit may bind ubiquinone. This chain is NADH-quinone oxidoreductase subunit H, found in Verminephrobacter eiseniae (strain EF01-2).